The primary structure comprises 635 residues: MIRVICNNETVELPKGATAADFASKIKNSHYFAGVVINDQIKDLSTTLNEGDTLRFVTFEDSEGREIFLHTSAHILAQAVLRLWPQAVPTIGPVINQGFYYDFANLSVSEEDLLAIENMMEQIVQEKLEVSKKTFNGKEEALKEFMHNAFKAELIQELPEGESITAYSQGEFMDLCRGPHLPSTAPVKAFKLLRTSAAYWRGDPSRESLVRIYGISFPTTKELKEHLHQLEEAKKRDHRVLGAKLDLFSQQECSAGMPFFHPRGMIVWDALIGYWQRLHQLAGYKQILTPQLMNRSLWETSGHWSNYKANMYTLKIDEEDYAIKPMNCPGCMLYYKTRLHSYKEFPLRIAEIGHVHRYEVSGALSGLMRVRAFHQDDAHVFLTPEQVEEETLNILNLVSELYSTFGLEYHLELSTRPEKDTIGSDELWELATSALERALINSNTPFIINPGDGAFYGPKIDIHVKDAIQRTWQCGTIQLDMFLPERFELEYTNAQGEKSTPIMLHRALFGSIERFLGILIEHFKGKFPLWLSPEHIRLITVADRHQPHAKELAAAWQKLGLVVTVDDSNESVSKKIRNAQNMQVNYMVTLGDREIEENTLAIRTRDNRVLNAMTVETFINTILEEKNSLSLTPLL.

In terms of domain architecture, TGS spans 1 to 58 (MIRVICNNETVELPKGATAADFASKIKNSHYFAGVVINDQIKDLSTTLNEGDTLRFVT). Residues 237–528 (DHRVLGAKLD…LIEHFKGKFP (292 aa)) are catalytic. Positions 328, 379, and 505 each coordinate Zn(2+).

This sequence belongs to the class-II aminoacyl-tRNA synthetase family. In terms of assembly, homodimer. Zn(2+) is required as a cofactor.

Its subcellular location is the cytoplasm. It carries out the reaction tRNA(Thr) + L-threonine + ATP = L-threonyl-tRNA(Thr) + AMP + diphosphate + H(+). Catalyzes the attachment of threonine to tRNA(Thr) in a two-step reaction: L-threonine is first activated by ATP to form Thr-AMP and then transferred to the acceptor end of tRNA(Thr). Also edits incorrectly charged L-seryl-tRNA(Thr). This chain is Threonine--tRNA ligase, found in Chlamydia caviae (strain ATCC VR-813 / DSM 19441 / 03DC25 / GPIC) (Chlamydophila caviae).